Consider the following 327-residue polypeptide: MATRIEFHKHGGPEVLQAVEFTPADPAENEIQVENKAIGINFIDTYIRSGLYPPPSLPSGLGTEAAGIVSKVGSGVKHIKAGDRVVYAQSALGAYSSVHNIIADKAAILPAAISFEQAAASFLKGLTVYYLLRKTYEIKPDEQFLFHAAAGGVGLIACQWAKALGAKLIGTVGTAQKAQSALKAGAWQVINYREEDLVERLKEITGGKKVRVVYDSVGRDTWERSLDCLQRRGLMVSFGNSSGAVTGVNLGILNQKGSLYVTRPSLQGYITTREELTEASNELFSLIASGVIKVDVAEQQKYPLKDAQRAHEILESRATQGSSLLIP.

Residues 42–46 (FIDTY), Tyr130, 152–153 (GV), 173–177 (GTAQK), Tyr192, Ser216, 238–241 (FGNS), 264–266 (PSL), and Arg317 each bind NADP(+).

This sequence belongs to the zinc-containing alcohol dehydrogenase family. Quinone oxidoreductase subfamily. Homodimer.

It catalyses the reaction 2 a quinone + NADPH + H(+) = 2 a 1,4-benzosemiquinone + NADP(+). This Escherichia coli (strain K12) protein is Quinone oxidoreductase 1 (qorA).